Reading from the N-terminus, the 1094-residue chain is Probable arabinosyltransferase C (1094 aa).

13 consecutive transmembrane segments (helical) span residues 28–50 (IARY…TPLL), 232–251 (AAMI…LHIL), 264–286 (PARW…WWHF), 341–360 (SIWM…WVIS), 373–392 (TSRA…WLPL), 431–453 (IGAL…LVAI), 466–488 (RFGV…IPIF), 530–552 (SIAR…AMSL), 565–582 (SRRI…MMFT), 586–608 (WTHH…AVAV), 620–642 (TVFA…GWWY), 657–679 (WRWS…AAWF), and 700–722 (LAGI…EVVS). Residues 817–831 (GSEPGTEGGTTAAPG) show a composition bias toward low complexity. A disordered region spans residues 817–836 (GSEPGTEGGTTAAPGINGSR).

Belongs to the emb family.

The protein localises to the cell membrane. Arabinosyl transferase responsible for the polymerization of arabinose into the arabinan of arabinogalactan. The protein is Probable arabinosyltransferase C (embC) of Mycobacterium bovis (strain ATCC BAA-935 / AF2122/97).